The primary structure comprises 341 residues: MKPQAILARILEQRETPYEEMVELMRAIMSGNVSPAMTAALMTGLRMKRESIGEITAAAQVMRELALHIEVADSVNLVDTCGTGGDGCNTFNISTASAFVAAAADAQVAKHGGRSVSSKAGSADVLEAIGIHLNQTPDQIAQSITEVGIGFMFAPNFHHAMKHAAPVRRELGVRTLFNILGPLTNPAGAKNQLLGVFNEDLTGILAQALLRLGSQHAMIVHGSDGLDEITISGPTKIAELKEGEIREYTVQPEDFGLERTAIESLQVNSTDDARVMLLSVLDNHPGPARDIVLLNAGAAIYVAGKADSWAEGVEIARDKLASGAAKEKMLALIKFSNQLTH.

Residues Gly82, 85–86 (GD), Thr90, 92–95 (NIST), 110–118 (KHGGRSVSS), and Ser122 each bind 5-phospho-alpha-D-ribose 1-diphosphate. Gly82 lines the anthranilate pocket. Mg(2+) is bound at residue Ser94. Position 168 (Arg168) interacts with anthranilate. Residues Asp227 and Glu228 each coordinate Mg(2+).

This sequence belongs to the anthranilate phosphoribosyltransferase family. As to quaternary structure, homodimer. It depends on Mg(2+) as a cofactor.

The catalysed reaction is N-(5-phospho-beta-D-ribosyl)anthranilate + diphosphate = 5-phospho-alpha-D-ribose 1-diphosphate + anthranilate. It participates in amino-acid biosynthesis; L-tryptophan biosynthesis; L-tryptophan from chorismate: step 2/5. In terms of biological role, catalyzes the transfer of the phosphoribosyl group of 5-phosphorylribose-1-pyrophosphate (PRPP) to anthranilate to yield N-(5'-phosphoribosyl)-anthranilate (PRA). This chain is Anthranilate phosphoribosyltransferase, found in Nitrosomonas eutropha (strain DSM 101675 / C91 / Nm57).